The sequence spans 188 residues: Cell division protein ZapC (188 aa).

This sequence belongs to the ZapC family. Interacts directly with FtsZ.

The protein localises to the cytoplasm. Contributes to the efficiency of the cell division process by stabilizing the polymeric form of the cell division protein FtsZ. Acts by promoting interactions between FtsZ protofilaments and suppressing the GTPase activity of FtsZ. In Psychromonas ingrahamii (strain DSM 17664 / CCUG 51855 / 37), this protein is Cell division protein ZapC.